Consider the following 391-residue polypeptide: 23S rRNA (uracil(747)-C(5))-methyltransferase RlmC (391 aa).

Positions 5, 13, 16, and 95 each coordinate [4Fe-4S] cluster. Positions 220, 249, 276, and 322 each coordinate S-adenosyl-L-methionine. The active-site Nucleophile is cysteine 349.

It belongs to the class I-like SAM-binding methyltransferase superfamily. RNA M5U methyltransferase family. RlmC subfamily.

It catalyses the reaction uridine(747) in 23S rRNA + S-adenosyl-L-methionine = 5-methyluridine(747) in 23S rRNA + S-adenosyl-L-homocysteine + H(+). Its function is as follows. Catalyzes the formation of 5-methyl-uridine at position 747 (m5U747) in 23S rRNA. In Actinobacillus pleuropneumoniae serotype 3 (strain JL03), this protein is 23S rRNA (uracil(747)-C(5))-methyltransferase RlmC.